Here is a 244-residue protein sequence, read N- to C-terminus: 2-C-methyl-D-erythritol 4-phosphate cytidylyltransferase (244 aa).

This sequence belongs to the IspD/TarI cytidylyltransferase family. IspD subfamily.

It carries out the reaction 2-C-methyl-D-erythritol 4-phosphate + CTP + H(+) = 4-CDP-2-C-methyl-D-erythritol + diphosphate. Its pathway is isoprenoid biosynthesis; isopentenyl diphosphate biosynthesis via DXP pathway; isopentenyl diphosphate from 1-deoxy-D-xylulose 5-phosphate: step 2/6. In terms of biological role, catalyzes the formation of 4-diphosphocytidyl-2-C-methyl-D-erythritol from CTP and 2-C-methyl-D-erythritol 4-phosphate (MEP). This is 2-C-methyl-D-erythritol 4-phosphate cytidylyltransferase from Prosthecochloris aestuarii (strain DSM 271 / SK 413).